The chain runs to 148 residues: uncharacterized protein (148 aa).

It to A.tumefaciens Atu0565/AGR_C_992.

This is an uncharacterized protein from Rhizobium meliloti (strain 1021) (Ensifer meliloti).